An 862-amino-acid chain; its full sequence is Eukaryotic translation initiation factor 3 subunit C (862 aa).

Positions 1-81 (MSSRFFYGGG…EEEEKVTVVK (81 aa)) are disordered. Residues 17 to 54 (SSDEEELYSDREEEEKSEEEESSEEEDETSEEEESDEE) show a composition bias toward acidic residues. Residues 55–65 (TGAKKFLKDVA) are compositionally biased toward basic and acidic residues. The span at 66-75 (SDSEEEEEEE) shows a compositional bias: acidic residues. The PCI domain occupies 600 to 774 (FHMHINLELL…NAIVFRKGVE (175 aa)). Residues 813-862 (RDQGAGARGGRGSGRGGQARGGPRFPGGQQGRRPGGQQFGGGALGGAIKA) are disordered. Residues 818-862 (GARGGRGSGRGGQARGGPRFPGGQQGRRPGGQQFGGGALGGAIKA) show a composition bias toward gly residues.

It belongs to the eIF-3 subunit C family. As to quaternary structure, component of the eukaryotic translation initiation factor 3 (eIF-3) complex.

The protein localises to the cytoplasm. Its function is as follows. Component of the eukaryotic translation initiation factor 3 (eIF-3) complex, which is involved in protein synthesis of a specialized repertoire of mRNAs and, together with other initiation factors, stimulates binding of mRNA and methionyl-tRNAi to the 40S ribosome. The eIF-3 complex specifically targets and initiates translation of a subset of mRNAs involved in cell proliferation. This is Eukaryotic translation initiation factor 3 subunit C (nip1) from Neosartorya fischeri (strain ATCC 1020 / DSM 3700 / CBS 544.65 / FGSC A1164 / JCM 1740 / NRRL 181 / WB 181) (Aspergillus fischerianus).